Consider the following 317-residue polypeptide: Ribosomal RNA small subunit methyltransferase H (317 aa).

S-adenosyl-L-methionine contacts are provided by residues 32–34 (GGH), Asp51, Phe78, Asp99, and Gln106.

Belongs to the methyltransferase superfamily. RsmH family.

The protein localises to the cytoplasm. It catalyses the reaction cytidine(1402) in 16S rRNA + S-adenosyl-L-methionine = N(4)-methylcytidine(1402) in 16S rRNA + S-adenosyl-L-homocysteine + H(+). Specifically methylates the N4 position of cytidine in position 1402 (C1402) of 16S rRNA. This is Ribosomal RNA small subunit methyltransferase H from Helicobacter hepaticus (strain ATCC 51449 / 3B1).